The sequence spans 756 residues: Multicystatin (756 aa).

8 consecutive Cystatin domains span residues 3–96, 97–191, 192–285, 286–380, 381–474, 475–568, 569–662, and 663–756; these read IVGG…DDST, MPGG…DDIA, KLGG…DDSA, KTGG…DSAK, IIGG…DDSA, and KPGG…DATK. 8 short sequence motifs (secondary area of contact) span residues 48–52, 142–146, 237–241, 331–335, 426–430, 520–524, 614–618, and 708–712; these read QIVAG, QVVAG, QLVSG, and QLVAG.

Belongs to the cystatin family. Phytocystatin subfamily. In terms of tissue distribution, expressed abundantly in tuber and leaf.

Its function is as follows. Probably has a role in the plant's defense system. In Solanum tuberosum (Potato), this protein is Multicystatin.